We begin with the raw amino-acid sequence, 88 residues long: Homeobox protein knotted-1-like 3 (88 aa).

One can recognise an ELK domain in the interval 4–24 (ELKKQLLRKYSGCLGNLRKEL). Positions 25–88 (CKKRKKDKLP…NQRKRHWKPS (64 aa)) form a DNA-binding region, homeobox; TALE-type.

Belongs to the TALE/KNOX homeobox family. As to expression, strongly expressed in ear inflorescence primordia and shoot meristem. Weakly expressed in embryos. Absent from leaves.

It localises to the nucleus. In terms of biological role, probably binds to the DNA sequence 5'-TGAC-3'. The chain is Homeobox protein knotted-1-like 3 (KNOX3) from Zea mays (Maize).